We begin with the raw amino-acid sequence, 701 residues long: Elongation factor G 2 (701 aa).

Residues glutamate 8–alanine 290 enclose the tr-type G domain. Residues alanine 17 to threonine 24, aspartate 88 to histidine 92, and asparagine 142 to aspartate 145 contribute to the GTP site.

It belongs to the TRAFAC class translation factor GTPase superfamily. Classic translation factor GTPase family. EF-G/EF-2 subfamily.

It is found in the cytoplasm. In terms of biological role, catalyzes the GTP-dependent ribosomal translocation step during translation elongation. During this step, the ribosome changes from the pre-translocational (PRE) to the post-translocational (POST) state as the newly formed A-site-bound peptidyl-tRNA and P-site-bound deacylated tRNA move to the P and E sites, respectively. Catalyzes the coordinated movement of the two tRNA molecules, the mRNA and conformational changes in the ribosome. The polypeptide is Elongation factor G 2 (Cupriavidus pinatubonensis (strain JMP 134 / LMG 1197) (Cupriavidus necator (strain JMP 134))).